A 411-amino-acid chain; its full sequence is Tyrosine--tRNA ligase (411 aa).

Positions 50 to 59 match the 'HIGH' region motif; it reads PTRPDLHLGH. Residues 236–240 carry the 'KMSKS' region motif; sequence KMSKS. Residue Lys-239 coordinates ATP. The region spanning 345–409 is the S4 RNA-binding domain; sequence VSMAKLVVLA…GKDKFARLVL (65 aa).

It belongs to the class-I aminoacyl-tRNA synthetase family. TyrS type 2 subfamily. As to quaternary structure, homodimer.

Its subcellular location is the cytoplasm. The catalysed reaction is tRNA(Tyr) + L-tyrosine + ATP = L-tyrosyl-tRNA(Tyr) + AMP + diphosphate + H(+). Functionally, catalyzes the attachment of tyrosine to tRNA(Tyr) in a two-step reaction: tyrosine is first activated by ATP to form Tyr-AMP and then transferred to the acceptor end of tRNA(Tyr). In Deinococcus radiodurans (strain ATCC 13939 / DSM 20539 / JCM 16871 / CCUG 27074 / LMG 4051 / NBRC 15346 / NCIMB 9279 / VKM B-1422 / R1), this protein is Tyrosine--tRNA ligase.